A 529-amino-acid polypeptide reads, in one-letter code: Inosine-5'-monophosphate dehydrogenase (529 aa).

2 CBS domains span residues 129–185 (MVTD…SKQV) and 189–246 (MTKA…PLAT). Residues Asp-283 and 334–336 (GVG) contribute to the NAD(+) site. Positions 336 and 338 each coordinate K(+). Residue Ser-339 participates in IMP binding. Cys-341 is a binding site for K(+). Residue Cys-341 is the Thioimidate intermediate of the active site. IMP is bound by residues 374–376 (DGG), 397–398 (GS), and 421–425 (YRGMG). The active-site Proton acceptor is the Arg-443. Glu-458 contacts IMP. The K(+) site is built by Glu-511, Ser-512, and His-513.

This sequence belongs to the IMPDH/GMPR family. Homotetramer. Requires K(+) as cofactor.

The enzyme catalyses IMP + NAD(+) + H2O = XMP + NADH + H(+). It participates in purine metabolism; XMP biosynthesis via de novo pathway; XMP from IMP: step 1/1. Mycophenolic acid (MPA) is a non-competitive inhibitor that prevents formation of the closed enzyme conformation by binding to the same site as the amobile flap. In contrast, mizoribine monophosphate (MZP) is a competitive inhibitor that induces the closed conformation. MPA is a potent inhibitor of mammalian IMPDHs but a poor inhibitor of the bacterial enzymes. MZP is a more potent inhibitor of bacterial IMPDH. Catalyzes the conversion of inosine 5'-phosphate (IMP) to xanthosine 5'-phosphate (XMP), the first committed and rate-limiting step in the de novo synthesis of guanine nucleotides, and therefore plays an important role in the regulation of cell growth. The sequence is that of Inosine-5'-monophosphate dehydrogenase from Mycobacterium bovis (strain ATCC BAA-935 / AF2122/97).